The following is a 301-amino-acid chain: Single-stranded DNA-binding protein (301 aa).

Positions 3–7 (KRKST) are LAST. 4 residues coordinate Zn(2+): histidine 64, cysteine 77, cysteine 87, and cysteine 90. The tract at residues 272-301 (TKTEDDFMSSSSGSSSSADDTDLDDLLNDL) is disordered. Over residues 279 to 289 (MSSSSGSSSSA) the composition is skewed to low complexity. Residues 290-301 (DDTDLDDLLNDL) show a composition bias toward acidic residues.

Belongs to the Tequatrovirus single-stranded DNA-binding protein family. In terms of assembly, homodimer in the absence of DNA, monomer when binding DNA. Interacts with the DNA helicase assembly protein; a ternary complex between the helicase assembly protein, the single-stranded DNA-binding protein and ssDNA is an obligatory intermediate in the helicase loading mechanism. Part of the replicase complex that includes the DNA polymerase, the polymerase clamp, the clamp loader complex, the single-stranded DNA binding protein, the primase, the DnaB-like SF4 replicative helicase and the helicase assembly factor. Interacts (via C-terminus) with the viral SF1 dDA helicase. Interacts with the viral SF2 UvsW repair helicase.

Functionally, single-stranded DNA-binding protein that participates in viral DNA replication, recombination, and repair. Coats the lagging-strand ssDNA as the replication fork advances. Stimulates the activities of viral DNA polymerase and DnaB-like SF4 replicative helicase, probably via its interaction with the helicase assembly factor. Stimulates the unwinding activity of UvsW helicase, inhibits it DNA winding activity. Together with DnaB-like SF4 replicative helicase and the helicase assembly factor, promotes pairing of two homologous DNA molecules containing complementary single-stranded regions and mediates homologous DNA strand exchange. Also promotes the formation of joint molecules. mRNA specific autogenous translational repressor. The chain is Single-stranded DNA-binding protein from Escherichia coli (Bacteriophage T4).